The sequence spans 184 residues: ATP synthase subunit b, chloroplastic (184 aa).

A helical membrane pass occupies residues 27–49; that stretch reads LATNPINLSVVLGVLIFFGKGVL.

The protein belongs to the ATPase B chain family. As to quaternary structure, F-type ATPases have 2 components, F(1) - the catalytic core - and F(0) - the membrane proton channel. F(1) has five subunits: alpha(3), beta(3), gamma(1), delta(1), epsilon(1). F(0) has four main subunits: a(1), b(1), b'(1) and c(10-14). The alpha and beta chains form an alternating ring which encloses part of the gamma chain. F(1) is attached to F(0) by a central stalk formed by the gamma and epsilon chains, while a peripheral stalk is formed by the delta, b and b' chains.

Its subcellular location is the plastid. It is found in the chloroplast thylakoid membrane. Functionally, f(1)F(0) ATP synthase produces ATP from ADP in the presence of a proton or sodium gradient. F-type ATPases consist of two structural domains, F(1) containing the extramembraneous catalytic core and F(0) containing the membrane proton channel, linked together by a central stalk and a peripheral stalk. During catalysis, ATP synthesis in the catalytic domain of F(1) is coupled via a rotary mechanism of the central stalk subunits to proton translocation. In terms of biological role, component of the F(0) channel, it forms part of the peripheral stalk, linking F(1) to F(0). This chain is ATP synthase subunit b, chloroplastic, found in Piper cenocladum (Ant piper).